The following is a 318-amino-acid chain: N-succinylornithine carbamoyltransferase (318 aa).

Carbamoyl phosphate is bound by residues 47–50 (SLRT), Trp-75, and Arg-110. Residue Glu-142 participates in N(2)-succinyl-L-ornithine binding. 147–150 (HPLQ) lines the carbamoyl phosphate pocket. The N(2)-succinyl-L-ornithine site is built by His-176 and Lys-236. 274–275 (CL) serves as a coordination point for carbamoyl phosphate. Arg-278 is a N(2)-succinyl-L-ornithine binding site. Position 302 (Arg-302) interacts with carbamoyl phosphate.

Belongs to the aspartate/ornithine carbamoyltransferase superfamily. SOTCase family. In terms of assembly, homotrimer.

The enzyme catalyses N(2)-succinyl-L-ornithine + carbamoyl phosphate = N(2)-succinyl-L-citrulline + phosphate + H(+). It participates in amino-acid biosynthesis; L-arginine biosynthesis. Its function is as follows. Catalyzes the transfer of the carbamoyl group from carbamoyl phosphate to the delta-amino group of N(2)-succinyl-L-ornithine to produce N(2)-succinyl-L-citrulline. Is essential for arginine biosynthesis. Has no activity with either L-ornithine or L-aspartate as substrate. Also has no detectable AOTCase activity, being unable to convert N(2)-acetyl-L-ornithine to N(2)-acetyl-L-citrulline. This chain is N-succinylornithine carbamoyltransferase, found in Bacteroides thetaiotaomicron (strain ATCC 29148 / DSM 2079 / JCM 5827 / CCUG 10774 / NCTC 10582 / VPI-5482 / E50).